An 80-amino-acid chain; its full sequence is Large ribosomal subunit protein uL24 (80 aa).

The protein belongs to the universal ribosomal protein uL24 family. Part of the 50S ribosomal subunit.

In terms of biological role, one of two assembly initiator proteins, it binds directly to the 5'-end of the 23S rRNA, where it nucleates assembly of the 50S subunit. Its function is as follows. One of the proteins that surrounds the polypeptide exit tunnel on the outside of the subunit. The protein is Large ribosomal subunit protein uL24 of Chlorobaculum tepidum (strain ATCC 49652 / DSM 12025 / NBRC 103806 / TLS) (Chlorobium tepidum).